A 986-amino-acid chain; its full sequence is Resact receptor (986 aa).

Positions 1 to 21 (MATTRLLFLLVVAVMITMVRS) are cleaved as a signal peptide. The Extracellular portion of the chain corresponds to 22–507 (ATLHYNPTVI…GELCTNWGLY (486 aa)). 3 N-linked (GlcNAc...) asparagine glycosylation sites follow: N185, N361, and N410. A helical transmembrane segment spans residues 508–528 (LGTLIPAFIIIFGGGLGYYIY). Topologically, residues 529–986 (RKRAYEAALD…SHSCSALHSS (458 aa)) are cytoplasmic. One can recognise a Protein kinase domain in the interval 568–836 (LSAISVISNA…PNIIEVRTML (269 aa)).

It is found in the membrane. The enzyme catalyses GTP = 3',5'-cyclic GMP + diphosphate. Implicated as a cell-surface receptor on spermatozoa for 'resact' a chemotactic peptide, and on various other cells as a receptor for atrial natriuretic peptide. The polypeptide is Resact receptor (Arbacia punctulata (Punctuate sea urchin)).